A 398-amino-acid chain; its full sequence is Organelle RRM domain-containing protein 1, chloroplastic (398 aa).

The N-terminal 88 residues, 1-88 (MDTALPSVLI…RWVVVMDTPP (88 aa)), are a transit peptide targeting the chloroplast. Residues 54–70 (LLASSSESPPAQLAAAS) are compositionally biased toward low complexity. Positions 54 to 79 (LLASSSESPPAQLAAASTESQSRSSR) are disordered. In terms of domain architecture, RRM spans 299 to 377 (KRLFVTGLSF…WMIVVDVAKT (79 aa)).

Its subcellular location is the plastid. It is found in the chloroplast. In terms of biological role, involved in C-to-U editing of chloroplastic RNA. Functions as major chloroplastic editing factor. Controls a majority of the chloroplastic editing sites. This is Organelle RRM domain-containing protein 1, chloroplastic (ORRM1) from Zea mays (Maize).